The sequence spans 262 residues: Phosphatidylserine decarboxylase proenzyme (262 aa).

Catalysis depends on charge relay system; for autoendoproteolytic cleavage activity residues Asp-86, His-142, and Ser-226. Residue Ser-226 is the Schiff-base intermediate with substrate; via pyruvic acid; for decarboxylase activity of the active site. Ser-226 carries the post-translational modification Pyruvic acid (Ser); by autocatalysis.

This sequence belongs to the phosphatidylserine decarboxylase family. PSD-B subfamily. Prokaryotic type I sub-subfamily. As to quaternary structure, heterodimer of a large membrane-associated beta subunit and a small pyruvoyl-containing alpha subunit. It depends on pyruvate as a cofactor. In terms of processing, is synthesized initially as an inactive proenzyme. Formation of the active enzyme involves a self-maturation process in which the active site pyruvoyl group is generated from an internal serine residue via an autocatalytic post-translational modification. Two non-identical subunits are generated from the proenzyme in this reaction, and the pyruvate is formed at the N-terminus of the alpha chain, which is derived from the carboxyl end of the proenzyme. The autoendoproteolytic cleavage occurs by a canonical serine protease mechanism, in which the side chain hydroxyl group of the serine supplies its oxygen atom to form the C-terminus of the beta chain, while the remainder of the serine residue undergoes an oxidative deamination to produce ammonia and the pyruvoyl prosthetic group on the alpha chain. During this reaction, the Ser that is part of the protease active site of the proenzyme becomes the pyruvoyl prosthetic group, which constitutes an essential element of the active site of the mature decarboxylase.

Its subcellular location is the cell membrane. It catalyses the reaction a 1,2-diacyl-sn-glycero-3-phospho-L-serine + H(+) = a 1,2-diacyl-sn-glycero-3-phosphoethanolamine + CO2. It functions in the pathway phospholipid metabolism; phosphatidylethanolamine biosynthesis; phosphatidylethanolamine from CDP-diacylglycerol: step 2/2. In terms of biological role, catalyzes the formation of phosphatidylethanolamine (PtdEtn) from phosphatidylserine (PtdSer). This is Phosphatidylserine decarboxylase proenzyme from Bacillus cereus (strain ZK / E33L).